Consider the following 633-residue polypeptide: Threonine--tRNA ligase (633 aa).

Residues 1 to 59 (MIRITFSAEQKVKEYSGKVTGFDILQPDVLKEAIAFKVNGELHDLSREIEADAEIEVIQ) form the TGS domain. Residues 240–532 (DHRKIAKDMD…LIENYAGKFP (293 aa)) are catalytic. Residues Cys332, His383, and His509 each coordinate Zn(2+).

It belongs to the class-II aminoacyl-tRNA synthetase family. As to quaternary structure, homodimer. Zn(2+) serves as cofactor.

The protein localises to the cytoplasm. It catalyses the reaction tRNA(Thr) + L-threonine + ATP = L-threonyl-tRNA(Thr) + AMP + diphosphate + H(+). Its function is as follows. Catalyzes the attachment of threonine to tRNA(Thr) in a two-step reaction: L-threonine is first activated by ATP to form Thr-AMP and then transferred to the acceptor end of tRNA(Thr). Also edits incorrectly charged L-seryl-tRNA(Thr). In Wolbachia sp. subsp. Drosophila simulans (strain wRi), this protein is Threonine--tRNA ligase.